Here is a 100-residue protein sequence, read N- to C-terminus: uncharacterized protein (100 aa).

This is an uncharacterized protein from Homo sapiens (Human).